Consider the following 422-residue polypeptide: Metallocarboxypeptidase A-like protein TRV_02598 (422 aa).

Residues 1-16 (MQSLLLLATLLGSALG) form the signal peptide. The propeptide at 17–119 (GAIPSQSANY…ELLTLDGGAN (103 aa)) is activation peptide. One can recognise a Peptidase M14 domain in the interval 125–421 (SYHKYEDHLK…AGVKAMFSKL (297 aa)). Zn(2+) contacts are provided by histidine 185 and glutamate 188. Residues 185–188 (HARE), arginine 240, and 256–257 (NR) each bind substrate. Cysteine 250 and cysteine 273 form a disulfide bridge. Histidine 311 is a Zn(2+) binding site. 312–313 (SY) provides a ligand contact to substrate. Catalysis depends on glutamate 387, which acts as the Proton donor/acceptor.

The protein belongs to the peptidase M14 family. Zn(2+) is required as a cofactor.

It is found in the secreted. Its function is as follows. Extracellular metalloprotease that contributes to pathogenicity. The sequence is that of Metallocarboxypeptidase A-like protein TRV_02598 from Trichophyton verrucosum (strain HKI 0517).